The chain runs to 534 residues: Calcium-dependent protein kinase 18 (534 aa).

The disordered stretch occupies residues 1-49 (MGLCFSSPKATRRGTGSRNPNPDSPTQGKASEKVSNKNKKNTKKIQLRH). Gly-2 carries N-myristoyl glycine lipidation. The segment covering 14 to 29 (GTGSRNPNPDSPTQGK) has biased composition (polar residues). Basic residues predominate over residues 36–47 (NKNKKNTKKIQL). Residues 71–331 (YTIGKLLGHG…AAQALSHSWV (261 aa)) enclose the Protein kinase domain. ATP is bound by residues 77–85 (LGHGQFGFT) and Lys-100. Asp-197 serves as the catalytic Proton acceptor. Ser-237 carries the post-translational modification Phosphoserine. An autoinhibitory domain region spans residues 337–367 (ASEVPIDISVLNNMRQFVKFSRLKQIALRAL). EF-hand domains lie at 374 to 409 (DELDDLRDQFDAIDIDKNGSISLEEMRQALAKDVPW), 411 to 446 (LKDARVAEILQANDSNTDGLVDFTEFVVAALHVNQL), 453 to 488 (KWQQRSRAAFDKFDIDGDGFITPEELRLQTGLKGSI), and 491 to 518 (LLEEADVDEDGRISINEFRRLLRSASLK). Ca(2+) contacts are provided by Asp-387, Asp-389, Asn-391, Ser-393, Glu-398, Asp-424, Asn-426, Asp-428, Glu-435, Asp-466, Asp-468, Asp-470, Glu-477, Asp-496, Asp-498, Asp-500, and Arg-502. Residue Ser-504 is modified to Phosphoserine. Glu-507 contributes to the Ca(2+) binding site.

Belongs to the protein kinase superfamily. Ser/Thr protein kinase family. CDPK subfamily.

It localises to the membrane. It catalyses the reaction L-seryl-[protein] + ATP = O-phospho-L-seryl-[protein] + ADP + H(+). It carries out the reaction L-threonyl-[protein] + ATP = O-phospho-L-threonyl-[protein] + ADP + H(+). With respect to regulation, activated by calcium. Autophosphorylation may play an important role in the regulation of the kinase activity. Its function is as follows. May play a role in signal transduction pathways that involve calcium as a second messenger. This Arabidopsis thaliana (Mouse-ear cress) protein is Calcium-dependent protein kinase 18 (CPK18).